We begin with the raw amino-acid sequence, 438 residues long: MRFKFPLMAISLEVAMIVLFGLFVEYETPQNASQKNASHQNASQQGNTSSSAKKDQFFQLYPLFQDVHVMIFVGFGFLMTFLKKYGFSGVGFNLFLAALGLQWGTIMQGLLHSHGKEFHFGIYNMINADFSTATVLISFGAVLGKTSPIQMLIMTILEIAVFAGNEYLVTELFEASDTGASMTIHAFGAYFGLAVAGVLYRPGLRCEHPNDESVYHSDLFAMIGTLFLWIFWPSFNSAIADPGDHQYRAIVNTYMSLAACVITAYALSSLVERRGRLDMVHIQNATLAGGVAVGTCADMEIPLYAAMTIGSIAGIISVLGYKFFSPLLANKLMIHDTCGVHNLHGLPGVFGGLASIVAISWGMSTASMAMQAAALGSSIGSAIVGGLLTGLILKLPIWNQPPDEYCYDDSVSWKVPKFRELDNRFFQHANHNHVEHEV.

Residues 1–4 (MRFK) lie on the Cytoplasmic side of the membrane. Residues 5–25 (FPLMAISLEVAMIVLFGLFVE) form a helical membrane-spanning segment. At 26 to 61 (YETPQNASQKNASHQNASQQGNTSSSAKKDQFFQLY) the chain is on the extracellular side. N-linked (GlcNAc...) asparagine glycosylation is found at Asn-31, Asn-36, Asn-41, and Asn-47. A helical transmembrane segment spans residues 62–82 (PLFQDVHVMIFVGFGFLMTFL). Over 83-86 (KKYG) the chain is Cytoplasmic. Residues 87–107 (FSGVGFNLFLAALGLQWGTIM) form a helical membrane-spanning segment. The Extracellular portion of the chain corresponds to 108 to 121 (QGLLHSHGKEFHFG). The helical transmembrane segment at 122-142 (IYNMINADFSTATVLISFGAV) threads the bilayer. Residues 143 to 148 (LGKTSP) are Cytoplasmic-facing. Residues 149 to 169 (IQMLIMTILEIAVFAGNEYLV) form a helical membrane-spanning segment. Residues 170–178 (TELFEASDT) lie on the Extracellular side of the membrane. Residues 179–199 (GASMTIHAFGAYFGLAVAGVL) traverse the membrane as a helical segment. The Cytoplasmic segment spans residues 200–218 (YRPGLRCEHPNDESVYHSD). A helical membrane pass occupies residues 219–239 (LFAMIGTLFLWIFWPSFNSAI). The Extracellular segment spans residues 240-249 (ADPGDHQYRA). The chain crosses the membrane as a helical span at residues 250-270 (IVNTYMSLAACVITAYALSSL). Over 271 to 278 (VERRGRLD) the chain is Cytoplasmic. The chain crosses the membrane as a helical span at residues 279 to 296 (MVHIQNATLAGGVAVGTC). Topologically, residues 297-300 (ADME) are extracellular. The chain crosses the membrane as a helical span at residues 301–321 (IPLYAAMTIGSIAGIISVLGY). Over 322-342 (KFFSPLLANKLMIHDTCGVHN) the chain is Cytoplasmic. The chain crosses the membrane as a helical span at residues 343–363 (LHGLPGVFGGLASIVAISWGM). Residues 364-372 (STASMAMQA) lie on the Extracellular side of the membrane. A helical membrane pass occupies residues 373–393 (AALGSSIGSAIVGGLLTGLIL). The Cytoplasmic portion of the chain corresponds to 394–438 (KLPIWNQPPDEYCYDDSVSWKVPKFRELDNRFFQHANHNHVEHEV).

The protein belongs to the ammonium transporter (TC 2.A.49) family. Rh subfamily. As to quaternary structure, homodimer. Heterotrimer; a RHCE monomer interacts with a RHAG homodimer. Component of the ankyrin-1 complex in the erythrocyte, composed of ANK1, RHCE, RHAG, SLC4A1, EPB42, GYPA, GYPB and AQP1. Interacts with GYPB (via the N-terminal); this interaction bridges the (RHAG)2(RHCE) heterotrimer with the SLC4A1 Band 3 I dimer complexed with GYPA. In terms of processing, glycosylated.

Its subcellular location is the membrane. It catalyses the reaction methylamine(out) = methylamine(in). The enzyme catalyses NH4(+)(in) = NH4(+)(out). It carries out the reaction CO2(out) = CO2(in). Its function is as follows. Component of the ankyrin-1 complex, a multiprotein complex involved in the stability and shape of the erythrocyte membrane. Heterotrimer with RHCE (RHAG)2(RHCE), that transports ammonium and its related derivative methylammonium, in both neutral and ionic forms, across the erythrocyte membrane. The transport of NH4(+) is electrogenic and masks the NH3 transport. Also, may act as a CO2 channel. Moreover in erythrocyte, regulates RHD membrane expression and is associated with rhesus blood group antigen expression. This Mus musculus (Mouse) protein is Ammonium transporter Rh type A.